The chain runs to 400 residues: Argininosuccinate synthase (400 aa).

ATP is bound by residues 6-14 (AYSGGLDTS) and Ala33. L-citrulline is bound by residues Tyr84 and Ser89. Gly114 lines the ATP pocket. 3 residues coordinate L-aspartate: Thr116, Asn120, and Asp121. L-citrulline is bound at residue Asn120. 5 residues coordinate L-citrulline: Arg124, Ser173, Ser182, Glu258, and Tyr270.

The protein belongs to the argininosuccinate synthase family. Type 1 subfamily. In terms of assembly, homotetramer.

The protein resides in the cytoplasm. The enzyme catalyses L-citrulline + L-aspartate + ATP = 2-(N(omega)-L-arginino)succinate + AMP + diphosphate + H(+). The protein operates within amino-acid biosynthesis; L-arginine biosynthesis; L-arginine from L-ornithine and carbamoyl phosphate: step 2/3. The polypeptide is Argininosuccinate synthase (Thermus thermophilus (strain ATCC BAA-163 / DSM 7039 / HB27)).